Here is a 1312-residue protein sequence, read N- to C-terminus: Beta-N-acetylhexosaminidase (1312 aa).

A signal peptide spans 1 to 33 (MKHEKQQRFSIRKYAVGAASVLIGFAFQAQTVA). The span at 38 to 59 (TPTTTENQPTIHTVSDSPQSSE) shows a compositional bias: polar residues. The tract at residues 38 to 178 (TPTTTENQPT…ATEAGKERAA (141 aa)) is disordered. The segment covering 118-177 (AEKETANKKAEEASPKKEEAKEVDSKESNTDKTDKDKPAKKDEAKAEADKPATEAGKERA) has biased composition (basic and acidic residues). Catalytic domain regions lie at residues 176–616 (RAAT…TPEA) and 621–1046 (EAKR…PAVT). 2 consecutive G5 domains span residues 1059 to 1138 (NVET…GAPV) and 1150 to 1230 (TTEV…GTMV). The disordered stretch occupies residues 1244-1290 (EEKPKLEIPSQPAPSTAPAEESKVLPQDPAPVVTEKKLPETGTHDSA). Positions 1277–1286 (TEKKLPETGT) are enriched in basic and acidic residues. The short motif at 1281-1285 (LPETG) is the LPXTG sorting signal element. T1284 is modified (pentaglycyl murein peptidoglycan amidated threonine). Positions 1285–1312 (GTHDSAGLVVAGLMSTLAAYGLTKRKED) are cleaved as a propeptide — removed by sortase.

Belongs to the glycosyl hydrolase 20 family.

The protein localises to the secreted. It localises to the cell wall. The enzyme catalyses Hydrolysis of terminal non-reducing N-acetyl-D-hexosamine residues in N-acetyl-beta-D-hexosaminides.. This chain is Beta-N-acetylhexosaminidase (strH), found in Streptococcus pneumoniae serotype 4 (strain ATCC BAA-334 / TIGR4).